The primary structure comprises 383 residues: Acetylornithine deacetylase (383 aa).

His-80 is a binding site for Zn(2+). Asp-82 is an active-site residue. Asp-112 is a Zn(2+) binding site. The active site involves Glu-144. Zn(2+)-binding residues include Glu-145, Glu-169, and His-355.

It belongs to the peptidase M20A family. ArgE subfamily. In terms of assembly, homodimer. Zn(2+) is required as a cofactor. Requires Co(2+) as cofactor. Glutathione serves as cofactor.

It is found in the cytoplasm. It catalyses the reaction N(2)-acetyl-L-ornithine + H2O = L-ornithine + acetate. Its pathway is amino-acid biosynthesis; L-arginine biosynthesis; L-ornithine from N(2)-acetyl-L-ornithine (linear): step 1/1. Its function is as follows. Catalyzes the hydrolysis of the amide bond of N(2)-acetylated L-amino acids. Cleaves the acetyl group from N-acetyl-L-ornithine to form L-ornithine, an intermediate in L-arginine biosynthesis pathway, and a branchpoint in the synthesis of polyamines. This chain is Acetylornithine deacetylase, found in Escherichia coli O17:K52:H18 (strain UMN026 / ExPEC).